Here is a 900-residue protein sequence, read N- to C-terminus: Vacuolar membrane protein pep3 (900 aa).

The segment at 1 to 20 (MSLAEDWIDPNSSEDSDIQE) is disordered. 4 TPR repeats span residues 314 to 345 (HLAF…SPHE), 373 to 406 (NNET…NTVL), 408 to 436 (GYAE…VEEV), and 546 to 579 (MKDQ…ETLI). The stretch at 602 to 756 (DLDVHALIPS…MFSKKSGIKE (155 aa)) is one CHCR repeat. An RING-type; atypical zinc finger spans residues 837–884 (CWHCNQPLFSEPFVLFPCQHAFHRSCMLEKTYKLASEKNILKECQLCG).

It belongs to the VPS18 family.

It localises to the vacuole membrane. Required for vacuolar biogenesis. This is Vacuolar membrane protein pep3 (pep3) from Schizosaccharomyces pombe (strain 972 / ATCC 24843) (Fission yeast).